The primary structure comprises 197 residues: MVLVTQNAPNFIAPAILKNNQIVEQFDLKKYSNGQSTVLFFWPMDFTFVCPSEIIEFNKLHSEFKKRNVKIVGVSIDSVYVHQAWQNTLPKNGGIGKINFPMVSDVKHDIQKSYGIQHPNLGIALRASFLIDSNWIIRHQVVNDLPFGRNITDMIRMVDALDFHNKFGEVCPANWKKGEEGITASSEGVSQYLSKYS.

The Thioredoxin domain maps to valine 2–phenylalanine 163. The Cysteine sulfenic acid (-SOH) intermediate role is filled by cysteine 50.

The protein belongs to the peroxiredoxin family. AhpC/Prx1 subfamily. In terms of assembly, homodimer; disulfide-linked, upon oxidation. 5 homodimers assemble to form a ring-like decamer.

It is found in the cytoplasm. The catalysed reaction is a hydroperoxide + NADH + H(+) = an alcohol + NAD(+) + H2O. Functionally, thiol-specific peroxidase that catalyzes the reduction of hydrogen peroxide and organic hydroperoxides to water and alcohols, respectively. Plays a role in cell protection against oxidative stress by detoxifying peroxides. This chain is Alkyl hydroperoxide reductase C, found in Buchnera aphidicola subsp. Acyrthosiphon pisum (strain APS) (Acyrthosiphon pisum symbiotic bacterium).